Reading from the N-terminus, the 307-residue chain is 4-hydroxy-tetrahydrodipicolinate synthase (307 aa).

Residue Thr-57 participates in pyruvate binding. Tyr-145 acts as the Proton donor/acceptor in catalysis. The Schiff-base intermediate with substrate role is filled by Lys-173. Position 215 (Val-215) interacts with pyruvate.

This sequence belongs to the DapA family. In terms of assembly, homotetramer; dimer of dimers.

The protein resides in the cytoplasm. It carries out the reaction L-aspartate 4-semialdehyde + pyruvate = (2S,4S)-4-hydroxy-2,3,4,5-tetrahydrodipicolinate + H2O + H(+). Its pathway is amino-acid biosynthesis; L-lysine biosynthesis via DAP pathway; (S)-tetrahydrodipicolinate from L-aspartate: step 3/4. Its function is as follows. Catalyzes the condensation of (S)-aspartate-beta-semialdehyde [(S)-ASA] and pyruvate to 4-hydroxy-tetrahydrodipicolinate (HTPA). This Leptospira interrogans serogroup Icterohaemorrhagiae serovar copenhageni (strain Fiocruz L1-130) protein is 4-hydroxy-tetrahydrodipicolinate synthase.